We begin with the raw amino-acid sequence, 156 residues long: Ribosomal RNA large subunit methyltransferase H (156 aa).

Residues Leu73, Gly104, and 123-128 contribute to the S-adenosyl-L-methionine site; that span reads LSPLTF.

It belongs to the RNA methyltransferase RlmH family. Homodimer.

Its subcellular location is the cytoplasm. The enzyme catalyses pseudouridine(1915) in 23S rRNA + S-adenosyl-L-methionine = N(3)-methylpseudouridine(1915) in 23S rRNA + S-adenosyl-L-homocysteine + H(+). Its function is as follows. Specifically methylates the pseudouridine at position 1915 (m3Psi1915) in 23S rRNA. In Thioalkalivibrio sulfidiphilus (strain HL-EbGR7), this protein is Ribosomal RNA large subunit methyltransferase H.